We begin with the raw amino-acid sequence, 196 residues long: Probable GTP-binding protein EngB (196 aa).

One can recognise an EngB-type G domain in the interval aspartate 21 to serine 195. Residues glycine 29 to serine 36, glycine 56 to leucine 60, aspartate 75 to glycine 78, threonine 142 to aspartate 145, and isoleucine 174 to asparagine 176 contribute to the GTP site. Mg(2+) contacts are provided by serine 36 and threonine 58.

It belongs to the TRAFAC class TrmE-Era-EngA-EngB-Septin-like GTPase superfamily. EngB GTPase family. Mg(2+) is required as a cofactor.

In terms of biological role, necessary for normal cell division and for the maintenance of normal septation. The chain is Probable GTP-binding protein EngB from Mycoplasma capricolum subsp. capricolum (strain California kid / ATCC 27343 / NCTC 10154).